The following is a 240-amino-acid chain: Lactate utilization protein C (240 aa).

The protein belongs to the LutC/YkgG family.

In terms of biological role, is involved in L-lactate degradation and allows cells to grow with lactate as the sole carbon source. The protein is Lactate utilization protein C of Geobacillus thermodenitrificans (strain NG80-2).